The sequence spans 88 residues: uncharacterized protein (88 aa).

Positions 1-22 (MLKASILFITISLTLMLENSYG) are cleaved as a signal peptide. 3 disulfides stabilise this stretch: C59-C73, C66-C77, and C72-C82.

It localises to the secreted. This is an uncharacterized protein from Schistosoma japonicum (Blood fluke).